Consider the following 415-residue polypeptide: Gamma-glutamyl phosphate reductase (415 aa).

It belongs to the gamma-glutamyl phosphate reductase family.

It localises to the cytoplasm. It carries out the reaction L-glutamate 5-semialdehyde + phosphate + NADP(+) = L-glutamyl 5-phosphate + NADPH + H(+). It functions in the pathway amino-acid biosynthesis; L-proline biosynthesis; L-glutamate 5-semialdehyde from L-glutamate: step 2/2. Functionally, catalyzes the NADPH-dependent reduction of L-glutamate 5-phosphate into L-glutamate 5-semialdehyde and phosphate. The product spontaneously undergoes cyclization to form 1-pyrroline-5-carboxylate. The chain is Gamma-glutamyl phosphate reductase from Lachnospira eligens (strain ATCC 27750 / DSM 3376 / VPI C15-48 / C15-B4) (Eubacterium eligens).